The following is a 359-amino-acid chain: Probable 2-oxoacid dependent dioxygenase (359 aa).

The Fe2OG dioxygenase domain occupies 207 to 308 (KGLWMLCHCF…ISVACFFVHT (102 aa)). His231, Asp233, and His287 together coordinate Fe cation. The interval 329 to 359 (PPKYRDTTSESSNHYVARKPNGNSSLDHLRI) is disordered. Over residues 349-359 (NGNSSLDHLRI) the composition is skewed to polar residues.

The protein belongs to the iron/ascorbate-dependent oxidoreductase family. Requires Fe(2+) as cofactor. In terms of tissue distribution, expressed in leaves and seeds. All cultivars with seed-only-functional allele have low to non-detectable GSL-OH expression in the leaves.

The enzyme catalyses gluconapin + AH2 + O2 = progoitrin + A + H2O. Functionally, necessary for the hydroxylation of but-3-enyl glucosinolate to 2-hydroxybut-3-enyl glucosinolate, which is toxic to insects, bacteria and nematodes, inhibits seed germination and produces bitter flavors. The sequence is that of Probable 2-oxoacid dependent dioxygenase from Arabidopsis thaliana (Mouse-ear cress).